The sequence spans 54 residues: UPF0391 membrane protein TERTU_3637 (54 aa).

2 consecutive transmembrane segments (helical) span residues 4–24 and 29–49; these read WALV…TGLA and SIAW…LVAG.

The protein belongs to the UPF0391 family.

It localises to the cell membrane. This chain is UPF0391 membrane protein TERTU_3637, found in Teredinibacter turnerae (strain ATCC 39867 / T7901).